The primary structure comprises 342 residues: Trans-3-hydroxy-L-proline dehydratase (342 aa).

The Proton acceptor role is filled by serine 90. Substrate is bound by residues 91 to 92 (GS), aspartate 252, and 257 to 258 (GT).

The protein belongs to the proline racemase family.

It carries out the reaction trans-3-hydroxy-L-proline = 1-pyrroline-2-carboxylate + H2O. Catalyzes the dehydration of trans-3-hydroxy-L-proline (t3LHyp) to Delta(1)-pyrroline-2-carboxylate (Pyr2C). Can also catalyze the epimerization of trans-4-hydroxy-L-proline (t4LHyp) to cis-4-hydroxy-D-proline (c4DHyp), albeit with 150-fold lower efficiency. May be involved in the degradation pathway that converts t3LHyp to L-proline, which would allow R.meliloti to grow on t3LHyp as a sole carbon source. Displays no proline racemase activity. In Rhizobium meliloti (strain 1021) (Ensifer meliloti), this protein is Trans-3-hydroxy-L-proline dehydratase.